Here is a 205-residue protein sequence, read N- to C-terminus: dTTP/UTP pyrophosphatase (205 aa).

Catalysis depends on aspartate 71, which acts as the Proton acceptor.

The protein belongs to the Maf family. YhdE subfamily. It depends on a divalent metal cation as a cofactor.

It localises to the cytoplasm. The enzyme catalyses dTTP + H2O = dTMP + diphosphate + H(+). It carries out the reaction UTP + H2O = UMP + diphosphate + H(+). Nucleoside triphosphate pyrophosphatase that hydrolyzes dTTP and UTP. May have a dual role in cell division arrest and in preventing the incorporation of modified nucleotides into cellular nucleic acids. The protein is dTTP/UTP pyrophosphatase of Syntrophus aciditrophicus (strain SB).